Here is a 270-residue protein sequence, read N- to C-terminus: Phosphonoacetaldehyde hydrolase (270 aa).

Asp-11 acts as the Nucleophile in catalysis. Asp-11 and Ala-13 together coordinate Mg(2+). Lys-53 serves as the catalytic Schiff-base intermediate with substrate. Position 187 (Asp-187) interacts with Mg(2+).

The protein belongs to the HAD-like hydrolase superfamily. PhnX family. As to quaternary structure, homodimer. Requires Mg(2+) as cofactor.

It catalyses the reaction phosphonoacetaldehyde + H2O = acetaldehyde + phosphate + H(+). In terms of biological role, involved in phosphonate degradation. In Salmonella enteritidis PT4 (strain P125109), this protein is Phosphonoacetaldehyde hydrolase.